A 195-amino-acid chain; its full sequence is Probable nicotinate-nucleotide adenylyltransferase (195 aa).

The protein belongs to the NadD family.

The catalysed reaction is nicotinate beta-D-ribonucleotide + ATP + H(+) = deamido-NAD(+) + diphosphate. It participates in cofactor biosynthesis; NAD(+) biosynthesis; deamido-NAD(+) from nicotinate D-ribonucleotide: step 1/1. Its function is as follows. Catalyzes the reversible adenylation of nicotinate mononucleotide (NaMN) to nicotinic acid adenine dinucleotide (NaAD). The protein is Probable nicotinate-nucleotide adenylyltransferase of Mesorhizobium japonicum (strain LMG 29417 / CECT 9101 / MAFF 303099) (Mesorhizobium loti (strain MAFF 303099)).